A 452-amino-acid chain; its full sequence is Transcription factor ETV6 (452 aa).

A compositionally biased stretch (polar residues) spans 1–10 (MSETPAQCSI). Residues 1-30 (MSETPAQCSIKQERISYTPPESPVPSYASS) form a disordered region. Lys-11 carries the post-translational modification N6-acetyllysine; alternate. Lys-11 is covalently cross-linked (Glycyl lysine isopeptide (Lys-Gly) (interchain with G-Cter in SUMO2); alternate). The residue at position 18 (Thr-18) is a Phosphothreonine. Ser-22 is modified (phosphoserine). Positions 40-124 (ALRMEEDSIR…ELLQHILKQR (85 aa)) constitute a PNT domain. The disordered stretch occupies residues 158–262 (VQRTPRPSVD…PKPSSPRQES (105 aa)). Phosphoserine occurs at positions 213 and 238. Residues 230–250 (QESYPLSVSPMENNHCPASSE) show a composition bias toward polar residues. Ser-257 carries the post-translational modification Phosphoserine; by MAPK14. A Glycyl lysine isopeptide (Lys-Gly) (interchain with G-Cter in SUMO2) cross-link involves residue Lys-288. Lys-302 is subject to N6-acetyllysine; alternate. Lys-302 participates in a covalent cross-link: Glycyl lysine isopeptide (Lys-Gly) (interchain with G-Cter in SUMO2); alternate. A Phosphoserine modification is found at Ser-323. A DNA-binding region (ETS) is located at residues 339-420 (RLLWDYVYQL…PGQRLLFRFM (82 aa)). Residues Lys-403 and Lys-421 each participate in a glycyl lysine isopeptide (Lys-Gly) (interchain with G-Cter in SUMO2) cross-link.

Belongs to the ETS family. As to quaternary structure, can form homodimers or heterodimers with TEL2 or FLI1. Interacts with L3MBTL1 and HDAC9. Post-translationally, phosphorylation of Ser-257 by MAPK14 (p38) inhibits ETV6 transcriptional repression. In terms of tissue distribution, ubiquitous.

It is found in the nucleus. Its function is as follows. Transcriptional repressor; binds to the DNA sequence 5'-CCGGAAGT-3'. Plays a role in hematopoiesis and malignant transformation. The polypeptide is Transcription factor ETV6 (ETV6) (Homo sapiens (Human)).